A 175-amino-acid polypeptide reads, in one-letter code: Interferon gamma (175 aa).

An N-terminal signal peptide occupies residues Met1–Cys23. Gln24 is subject to Pyrrolidone carboxylic acid. 2 N-linked (GlcNAc...) asparagine glycosylation sites follow: Asn39 and Asn106.

Belongs to the type II (or gamma) interferon family. Homodimer. Interacts with IFNGR1 (via extracellular domain); this interaction promotes IFNGR1 dimerization. In terms of tissue distribution, released primarily from activated T lymphocytes.

It localises to the secreted. In terms of biological role, type II interferon produced by immune cells such as T-cells and NK cells that plays crucial roles in antimicrobial, antiviral, and antitumor responses by activating effector immune cells and enhancing antigen presentation. Primarily signals through the JAK-STAT pathway after interaction with its receptor IFNGR1 to affect gene regulation. Upon IFNG binding, IFNGR1 intracellular domain opens out to allow association of downstream signaling components JAK2, JAK1 and STAT1, leading to STAT1 activation, nuclear translocation and transcription of IFNG-regulated genes. Many of the induced genes are transcription factors such as IRF1 that are able to further drive regulation of a next wave of transcription. Plays a role in class I antigen presentation pathway by inducing a replacement of catalytic proteasome subunits with immunoproteasome subunits. In turn, increases the quantity, quality, and repertoire of peptides for class I MHC loading. Increases the efficiency of peptide generation also by inducing the expression of activator PA28 that associates with the proteasome and alters its proteolytic cleavage preference. Up-regulates as well MHC II complexes on the cell surface by promoting expression of several key molecules such as cathepsins B/CTSB, H/CTSH, and L/CTSL. Participates in the regulation of hematopoietic stem cells during development and under homeostatic conditions by affecting their development, quiescence, and differentiation. This Peromyscus maniculatus (North American deer mouse) protein is Interferon gamma (IFNG).